The primary structure comprises 59 residues: UPF0434 protein Pnec_0311 (59 aa).

Belongs to the UPF0434 family.

In Polynucleobacter necessarius subsp. necessarius (strain STIR1), this protein is UPF0434 protein Pnec_0311.